The sequence spans 339 residues: UDP-N-acetylglucosamine--N-acetylmuramyl-(pentapeptide) pyrophosphoryl-undecaprenol N-acetylglucosamine transferase (339 aa).

Residues 11 to 13 (TGG), asparagine 127, arginine 170, serine 188, isoleucine 235, and glutamine 280 contribute to the UDP-N-acetyl-alpha-D-glucosamine site.

The protein belongs to the glycosyltransferase 28 family. MurG subfamily.

It localises to the cell inner membrane. It catalyses the reaction di-trans,octa-cis-undecaprenyl diphospho-N-acetyl-alpha-D-muramoyl-L-alanyl-D-glutamyl-meso-2,6-diaminopimeloyl-D-alanyl-D-alanine + UDP-N-acetyl-alpha-D-glucosamine = di-trans,octa-cis-undecaprenyl diphospho-[N-acetyl-alpha-D-glucosaminyl-(1-&gt;4)]-N-acetyl-alpha-D-muramoyl-L-alanyl-D-glutamyl-meso-2,6-diaminopimeloyl-D-alanyl-D-alanine + UDP + H(+). Its pathway is cell wall biogenesis; peptidoglycan biosynthesis. Cell wall formation. Catalyzes the transfer of a GlcNAc subunit on undecaprenyl-pyrophosphoryl-MurNAc-pentapeptide (lipid intermediate I) to form undecaprenyl-pyrophosphoryl-MurNAc-(pentapeptide)GlcNAc (lipid intermediate II). This chain is UDP-N-acetylglucosamine--N-acetylmuramyl-(pentapeptide) pyrophosphoryl-undecaprenol N-acetylglucosamine transferase, found in Thermotoga maritima (strain ATCC 43589 / DSM 3109 / JCM 10099 / NBRC 100826 / MSB8).